The following is a 2110-amino-acid chain: Tenascin (2110 aa).

Residues 1–22 (MGAVTWLLPGIFLALFALTPEG) form the signal peptide. N-linked (GlcNAc...) asparagine glycosylation occurs at Asn-38. Ser-65, Ser-70, and Ser-72 each carry phosphoserine. Residues 69–91 (ESASGEKDLTPTPESSGSFQEHT) are disordered. O-linked (Xyl...) (chondroitin sulfate) serine glycosylation is present at Ser-72. Polar residues predominate over residues 80–89 (TPESSGSFQE). A coiled-coil region spans residues 118 to 142 (DVKELLSRLEELELLVSSLREQCTM). Asn-166 and Asn-184 each carry an N-linked (GlcNAc...) asparagine glycan. Positions 174 to 185 (CVCEPGWKGPNC) constitute an EGF-like 1; incomplete domain. EGF-like domains follow at residues 186-216 (SEPDCPGNCNLRGQCLDGQCICDEGFTGEDC), 217-247 (SQLACPNDCNDQGRCVNGVCVCFEGYAGPDC), 248-279 (GLEVCPVPCSEEHGMCVDGRCVCKDGFAGEDC), 280-310 (NEPLCLNNCYNRGRCVENECVCDEGFTGEDC), 311-341 (SELICPNDCFDRGRCINGTCYCEEGFTGEDC), 342-372 (GELTCPNDCQGRGQCEEGQCVCNEGFAGADC), 373-403 (SEKRCPADCHHRGRCLNGQCECDDGFTGADC), 404-434 (GDLQCPNGCSGHGRCVNGQCVCDEGYTGEDC), 435-465 (SQRRCPNDCHNRGLCVQGKCICEQGFKGFDC), 466-496 (SEMSCPNDCHQHGRCVNGMCICDDDYTGEDC), 497-527 (RDRRCPRDCSQRGRCVDGQCICEDGFTGPDC), 528-558 (AELSCPSDCHGHGRCVNGQCICHEGFTGKDC), 559-589 (KEQRCPSDCHGQGRCEDGQCICHEGFTGLDC), and 590-621 (GQRSCPNDCSNQGQCVSGRCICNEGYTGIDCS). Disulfide bonds link Cys-190–Cys-200, Cys-194–Cys-205, Cys-207–Cys-216, Cys-221–Cys-231, Cys-225–Cys-236, Cys-238–Cys-247, Cys-252–Cys-263, Cys-256–Cys-268, Cys-270–Cys-279, Cys-284–Cys-294, Cys-288–Cys-299, Cys-301–Cys-310, Cys-315–Cys-325, Cys-319–Cys-330, Cys-332–Cys-341, Cys-346–Cys-356, Cys-350–Cys-361, Cys-363–Cys-372, Cys-377–Cys-387, Cys-381–Cys-392, Cys-394–Cys-403, Cys-408–Cys-418, Cys-412–Cys-423, Cys-425–Cys-434, Cys-439–Cys-449, Cys-443–Cys-454, Cys-456–Cys-465, Cys-470–Cys-480, Cys-474–Cys-485, Cys-487–Cys-496, Cys-501–Cys-511, Cys-505–Cys-516, Cys-518–Cys-527, Cys-532–Cys-542, Cys-536–Cys-547, Cys-549–Cys-558, Cys-563–Cys-573, Cys-567–Cys-578, Cys-580–Cys-589, Cys-594–Cys-604, Cys-598–Cys-609, and Cys-611–Cys-620. Asn-327 carries an N-linked (GlcNAc...) asparagine glycan. Fibronectin type-III domains lie at 625-715 (PPKD…LPAP), 716-804 (EGLK…TRLD), 805-894 (APSH…TGLD), 895-988 (APRN…IDAP), 989-1077 (KDLR…VPSL), 1078-1165 (ENLT…TGTT), 1167-1259 (NLGE…LPQL), 1260-1348 (GGLS…AREP), 1349-1440 (EIGN…ALPL), 1442-1530 (ENLT…EAEP), 1531-1620 (EVDN…TAMG), 1621-1710 (SPKE…ALDG), 1711-1797 (PSGL…TDLD), and 1798-1886 (SPRE…IGLL). The N-linked (GlcNAc...) asparagine glycan is linked to Asn-788. At Thr-905 the chain carries Phosphothreonine. 12 N-linked (GlcNAc...) asparagine glycosylation sites follow: Asn-1018, Asn-1079, Asn-1093, Asn-1119, Asn-1184, Asn-1210, Asn-1275, Asn-1301, Asn-1354, Asn-1364, Asn-1394, and Asn-1443. Asn-1718 is a glycosylation site (N-linked (GlcNAc...) asparagine). The Fibrinogen C-terminal domain occupies 1884 to 2099 (GLLYPFPRDC…FAEMKLRPSN (216 aa)). Residues Asn-1969 and Asn-2071 are each glycosylated (N-linked (GlcNAc...) asparagine).

It belongs to the tenascin family. Homohexamer; disulfide-linked. A homotrimer may be formed in the triple coiled-coil region and may be stabilized by disulfide rings at both ends. Two of such half-hexabrachions may be disulfide linked within the central globule. Interacts with CSPG4. Interacts (via the 3rd fibronectin type-III domain) with integrin ITGA9:ITGB1. In terms of processing, N-glycosylated. In terms of tissue distribution, expressed in the corneal limbus, the periosteum and the rib molecular layer of the cerebellum, the matrix of kidney tubules, blood vessels, stomach and intestine (at protein level). As to expression, weakly expressed in the brain. Highly expressed in the thymus and moderately expressed in the brain.

The protein localises to the secreted. Its subcellular location is the extracellular space. It localises to the extracellular matrix. In terms of biological role, extracellular matrix protein implicated in guidance of migrating neurons as well as axons during development, synaptic plasticity as well as neuronal regeneration. Promotes neurite outgrowth when provided to neurons in culture. May play a role in supporting the growth of epithelial tumors. Ligand for integrins ITGA8:ITGB1, ITGA9:ITGB1, ITGAV:ITGB3 and ITGAV:ITGB6. In tumors, stimulates angiogenesis by elongation, migration and sprouting of endothelial cells. The chain is Tenascin from Mus musculus (Mouse).